The following is a 401-amino-acid chain: Glutamyl-tRNA reductase (401 aa).

Residues 49 to 52, Ser-92, 97 to 99, and Gln-103 contribute to the substrate site; these read TCNR and END. The Nucleophile role is filled by Cys-50. An NADP(+)-binding site is contributed by 171–176; sequence GNGKMA.

Belongs to the glutamyl-tRNA reductase family. In terms of assembly, homodimer.

The enzyme catalyses (S)-4-amino-5-oxopentanoate + tRNA(Glu) + NADP(+) = L-glutamyl-tRNA(Glu) + NADPH + H(+). It functions in the pathway porphyrin-containing compound metabolism; protoporphyrin-IX biosynthesis; 5-aminolevulinate from L-glutamyl-tRNA(Glu): step 1/2. Functionally, catalyzes the NADPH-dependent reduction of glutamyl-tRNA(Glu) to glutamate 1-semialdehyde (GSA). The polypeptide is Glutamyl-tRNA reductase (Picrophilus torridus (strain ATCC 700027 / DSM 9790 / JCM 10055 / NBRC 100828 / KAW 2/3)).